The following is a 196-amino-acid chain: ATP-dependent Clp protease proteolytic subunit (196 aa).

Ser-101 (nucleophile) is an active-site residue. Residue His-126 is part of the active site.

This sequence belongs to the peptidase S14 family. As to quaternary structure, component of the chloroplastic Clp protease core complex.

Its subcellular location is the plastid. It is found in the chloroplast stroma. The catalysed reaction is Hydrolysis of proteins to small peptides in the presence of ATP and magnesium. alpha-casein is the usual test substrate. In the absence of ATP, only oligopeptides shorter than five residues are hydrolyzed (such as succinyl-Leu-Tyr-|-NHMec, and Leu-Tyr-Leu-|-Tyr-Trp, in which cleavage of the -Tyr-|-Leu- and -Tyr-|-Trp bonds also occurs).. Functionally, cleaves peptides in various proteins in a process that requires ATP hydrolysis. Has a chymotrypsin-like activity. Plays a major role in the degradation of misfolded proteins. In Gossypium hirsutum (Upland cotton), this protein is ATP-dependent Clp protease proteolytic subunit.